A 389-amino-acid chain; its full sequence is Inner membrane transport protein YdhP (389 aa).

Residues 1 to 6 lie on the Cytoplasmic side of the membrane; sequence MKINYP. The chain crosses the membrane as a helical span at residues 7 to 27; sequence LLALAIGAFGIGTTEFSPMGL. Over 28 to 43 the chain is Periplasmic; the sequence is LPVIARGVDVSIPAAG. The chain crosses the membrane as a helical span at residues 44-64; the sequence is MLISAYAVGVMVGAPLMTLLL. The Cytoplasmic portion of the chain corresponds to 65-70; sequence SHRARR. A helical membrane pass occupies residues 71–91; sequence SALIFLMAIFTLGNVLSAIAP. The Periplasmic portion of the chain corresponds to 92 to 100; that stretch reads DYMTLMLSR. Residues 101-121 traverse the membrane as a helical segment; sequence ILTSLNHGAFFGLGSVVAASV. Topologically, residues 122–130 are cytoplasmic; the sequence is VPKHKQASA. The chain crosses the membrane as a helical span at residues 131-151; sequence VATMFMGLTLANIGGVPAATW. The Periplasmic portion of the chain corresponds to 152–159; sequence LGETIGWR. A helical transmembrane segment spans residues 160–180; it reads MSFLATAGLGVISMVSLFFSL. Topologically, residues 181–203 are cytoplasmic; sequence PKGGAGARPEVKKELAVLMRPQV. Residues 204–224 traverse the membrane as a helical segment; it reads LSALLTTVLGAGAMFTLYTYI. At 225-236 the chain is on the periplasmic side; that stretch reads SPVLQSITHATP. A helical transmembrane segment spans residues 237–257; the sequence is VFVTAMLVLIGVGFSIGNYLG. The Cytoplasmic portion of the chain corresponds to 258 to 266; sequence GKLADRSVN. A helical membrane pass occupies residues 267-287; sequence GTLKGFLLLLMVIMLAIPFLA. The Periplasmic segment spans residues 288-290; that stretch reads RNE. A helical membrane pass occupies residues 291–311; sequence FGAAISMVVWGAATFAVVPPL. Topologically, residues 312–330 are cytoplasmic; sequence QMRVMRVASEAPGLSSSVN. A helical transmembrane segment spans residues 331 to 351; that stretch reads IGAFNLGNALGAAAGGAVISA. The Periplasmic portion of the chain corresponds to 352 to 356; that stretch reads GLGYS. Residues 357-377 form a helical membrane-spanning segment; it reads FVPVMGAIVAGLALLLVFMSA. Residues 378–389 lie on the Cytoplasmic side of the membrane; that stretch reads RKQPETVCVANS.

It belongs to the major facilitator superfamily.

Its subcellular location is the cell inner membrane. The polypeptide is Inner membrane transport protein YdhP (ydhP) (Escherichia coli (strain K12)).